The sequence spans 274 residues: NADPH-dependent 7-cyano-7-deazaguanine reductase (274 aa).

Position 80–82 (80–82 (VES)) interacts with substrate. 82 to 83 (SK) contributes to the NADPH binding site. Cys181 acts as the Thioimide intermediate in catalysis. The active-site Proton donor is the Asp188. Position 220-221 (220-221 (HE)) interacts with substrate. 249-250 (RG) contacts NADPH.

This sequence belongs to the GTP cyclohydrolase I family. QueF type 2 subfamily. As to quaternary structure, homodimer.

The protein localises to the cytoplasm. It catalyses the reaction 7-aminomethyl-7-carbaguanine + 2 NADP(+) = 7-cyano-7-deazaguanine + 2 NADPH + 3 H(+). It functions in the pathway tRNA modification; tRNA-queuosine biosynthesis. Its function is as follows. Catalyzes the NADPH-dependent reduction of 7-cyano-7-deazaguanine (preQ0) to 7-aminomethyl-7-deazaguanine (preQ1). This Burkholderia thailandensis (strain ATCC 700388 / DSM 13276 / CCUG 48851 / CIP 106301 / E264) protein is NADPH-dependent 7-cyano-7-deazaguanine reductase.